Reading from the N-terminus, the 393-residue chain is MVQPHDHKSASPQDTVTSVSIQLLLFVDDRPSSQENIEQIQEHLERLKSEYPYDLQVIEIQQQPHLVEYFRLVATPALVKIVPEPRQTLAGSNIVDQLNKWWPRWQCAIKEAQDAQKVHNETNNQGDGDSPLNSVGYSAELIRLSDELFRLKKEKEELAEQIKFKDQVLAMLAHDLRSPLTAASIAVETLELANNQPDSPRIVQLKEQLYQQTRKQFRIMNRLITDILQASKSINAQLQLQHTHLYLQPLCLEILKQMGDQFQEKSLKIEKDIPQDLPPVYADEELIRQVIVNLLDNAIKYTPEEGTITVSILHRTTQKVQVSICDTGPGIPEEKQDRIFEGHFRLKRDEGKEGYGLGLSLCRKIIRAHYGQIWVDSTINQGSCFHFTLPVFR.

A Histidine kinase domain is found at 171-393; the sequence is MLAHDLRSPL…CFHFTLPVFR (223 aa). Residue His-174 is modified to Phosphohistidine; by autocatalysis.

In terms of assembly, homooligomerizes. Interacts with KaiC. Participates in the KaiABC clock complex, whose core is composed of a KaiC homohexamer, 6 KaiB and up to 6 KaiA dimers. SasA and KaiB(fs) compete to bind to KaiC.

It carries out the reaction ATP + protein L-histidine = ADP + protein N-phospho-L-histidine.. Functionally, member of the two-component regulatory system SasA/RpaA involved in genome-wide circadian gene expression. One of several clock output pathways. Participates in the Kai clock protein complex, the main circadian regulator in cyanobacteria, via its interaction with KaiC. KaiC enhances the autophosphorylation activity of SasA, which then transfers its phosphate group to RpaA to activate it. In addition to its output function, recruits fold-shifted KaiB (KaiB(fs)) to KaiC to cooperatively form the KaiB(6):KaiC(6) complex (independent of SasA kinase activity). Required for robustness of the circadian rhythm of gene expression and is involved in clock output, also required for adaptation to light/dark cycles. The chain is Adaptive-response sensory kinase SasA from Gloeothece citriformis (strain PCC 7424) (Cyanothece sp. (strain PCC 7424)).